The sequence spans 73 residues: Small ribosomal subunit protein bS18 (73 aa).

Belongs to the bacterial ribosomal protein bS18 family. Part of the 30S ribosomal subunit. Forms a tight heterodimer with protein bS6.

Its function is as follows. Binds as a heterodimer with protein bS6 to the central domain of the 16S rRNA, where it helps stabilize the platform of the 30S subunit. In Synechococcus sp. (strain RCC307), this protein is Small ribosomal subunit protein bS18.